The sequence spans 542 residues: 4-coumarate--CoA ligase-like 5 (542 aa).

The ATP site is built by serine 204, serine 205, glycine 206, threonine 207, threonine 208, and lysine 212. Phenylalanine 262 is a binding site for (E)-4-coumaroyl-AMP. Arginine 282 is a binding site for CoA. Residues 284-353 (DFIAALRAIE…SVFPNVELVQ (70 aa)) are SBD1. (E)-4-coumaroyl-AMP contacts are provided by glycine 331, glutamine 353, glycine 354, and threonine 358. The ATP site is built by glutamine 353, glycine 354, threonine 358, aspartate 418, and arginine 433. Residues 354 to 397 (GYGLTESSGAVAATVGPEESKAYGSVGKLGSHLQAKIVDPSTGY) are SBD2. (E)-4-coumaroyl-AMP is bound by residues lysine 435 and lysine 439. 2 residues coordinate CoA: lysine 441 and glycine 442. Lysine 524 serves as a coordination point for ATP.

This sequence belongs to the ATP-dependent AMP-binding enzyme family. The cofactor is Mg(2+).

The catalysed reaction is (E)-4-coumarate + ATP + CoA = (E)-4-coumaroyl-CoA + AMP + diphosphate. The enzyme catalyses (E)-4-coumarate + ATP + H(+) = (E)-4-coumaroyl-AMP + diphosphate. It catalyses the reaction (E)-4-coumaroyl-AMP + CoA = (E)-4-coumaroyl-CoA + AMP + H(+). Functionally, carboxylate--CoA ligase that may use 4-coumarate as substrate. Follows a two-step reaction mechanism, wherein the carboxylate substrate first undergoes adenylation by ATP, followed by a thioesterification in the presence of CoA to yield the final CoA thioester. The protein is 4-coumarate--CoA ligase-like 5 (4CLL5) of Oryza sativa subsp. japonica (Rice).